The chain runs to 1082 residues: Sodium/potassium exporting P-type ATPase 2 (1082 aa).

Residues 1 to 75 are Cytoplasmic-facing; the sequence is MSSINTNVAE…GANTLGDGDK (75 aa). A helical membrane pass occupies residues 76-96; the sequence is ISLTKIIAHQVCNAMILVLII. The Extracellular portion of the chain corresponds to 97-98; it reads SM. Residues 99–119 traverse the membrane as a helical segment; it reads VIALAIKDWISGGVIGFVVLI. Residues 120–308 are Cytoplasmic-facing; it reads NISVGFVQEY…VGTPLQRKLS (189 aa). Residues 309-329 traverse the membrane as a helical segment; sequence WLAIFLFWGCRYFCNYCNGIP. Over 330–336 the chain is Extracellular; the sequence is KNRVNKE. Residues 337–357 form a helical membrane-spanning segment; sequence VAIYAICVALSMIPSALIVVL. The Cytoplasmic portion of the chain corresponds to 358–807; it reads TITMAVGAQV…RMSSNIQKFV (450 aa). Catalysis depends on D393, which acts as the 4-aspartylphosphate intermediate. Residues D393 and T395 each coordinate Mg(2+). Residues T395, E499, K552, R604, T664, G665, D666, R723, and K729 each contribute to the ATP site. A Mg(2+)-binding site is contributed by D748. N751 contacts ATP. The chain crosses the membrane as a helical span at residues 808-828; that stretch reads LQLLAENVAQALYLMVGLAFI. At 829-832 the chain is on the extracellular side; sequence DDSG. The helical transmembrane segment at 833 to 853 threads the bilayer; that stretch reads LSVFPLSPVEVLWILVVTSCF. The Cytoplasmic segment spans residues 854-884; it reads PAMDLGQERASDDILEESPNSTIFTWEVIID. The chain crosses the membrane as a helical span at residues 885-905; sequence MIVYGFWMAVCCLVCFVIIVY. The Extracellular segment spans residues 906 to 935; sequence GEGDPYLGVNCNKSSSSNSDVCELVFRGRS. A helical membrane pass occupies residues 936–956; the sequence is ASFATMTWCALILAWECIHPY. Over 957–983 the chain is Cytoplasmic; sequence NSLFYMRQDTDHPWWKQTVIDLWDNQF. The chain crosses the membrane as a helical span at residues 984–1004; the sequence is LFWSVAIGFISVFPVVYIPVI. The Extracellular segment spans residues 1005–1007; it reads NTK. Residues 1008–1028 traverse the membrane as a helical segment; that stretch reads VFLHGPIGYEWGLAVGFSILF. Over 1029 to 1082 the chain is Cytoplasmic; that stretch reads LAGSELWKWIKRIHKRKANKKAKNPEYELERSDPFKKYASFSRSNTMDRPELMV.

The protein belongs to the cation transport ATPase (P-type) (TC 3.A.3) family. Type IID subfamily. Requires Mg(2+) as cofactor. In terms of processing, the active site is phosphorylated in presence of sodium or potassium and in conditions of higher pH. Not phosphorylated in presence of calcium ions.

The protein localises to the cell membrane. It catalyses the reaction Na(+)(in) + ATP + H2O = Na(+)(out) + ADP + phosphate + H(+). The catalysed reaction is K(+)(in) + ATP + H2O = K(+)(out) + ADP + phosphate + H(+). Catalyzes the hydrolysis of ATP coupled with the export of sodium and potassium from the cell. May be an inefficient sodium exporter. May transport other cations such as lithium. Sodium/potassium efflux ATPases are involved in salt tolerance and maintaining the membrane potential across the plasma membrane in high salinity (Na+) or alkaline (K+) environments. This Schwanniomyces occidentalis (Yeast) protein is Sodium/potassium exporting P-type ATPase 2.